The primary structure comprises 92 residues: UPF0728 protein (92 aa).

Belongs to the UPF0728 family.

This chain is UPF0728 protein, found in Branchiostoma floridae (Florida lancelet).